A 46-amino-acid polypeptide reads, in one-letter code: MSDNPVKEEVQQFDKKCLKKTNTAEKNTLPTKEDIDQEKKAAEGGK.

Residues 21–30 are compositionally biased toward polar residues; that stretch reads TNTAEKNTLP. The disordered stretch occupies residues 21-46; that stretch reads TNTAEKNTLPTKEDIDQEKKAAEGGK. Residues 31–46 are compositionally biased toward basic and acidic residues; sequence TKEDIDQEKKAAEGGK.

This sequence belongs to the thymosin beta family.

The protein resides in the cytoplasm. The protein localises to the cytoskeleton. In terms of biological role, plays an important role in the organization of the cytoskeleton. Binds to and sequesters actin monomers (G actin) and therefore inhibits actin polymerization. The polypeptide is Thymosin beta-a (Cyprinus carpio (Common carp)).